The primary structure comprises 175 residues: B9 domain-containing protein 2 (175 aa).

Residues 2 to 118 enclose the C2 B9-type domain; it reads AEVHVIGQIM…DCPTWRPLGS (117 aa).

The protein belongs to the B9D family. As to quaternary structure, part of the tectonic-like complex (also named B9 complex). Interacts with TUBG1.

The protein resides in the cytoplasm. The protein localises to the cytoskeleton. It is found in the cilium basal body. It localises to the cilium axoneme. Its subcellular location is the nucleus. Functionally, component of the tectonic-like complex, a complex localized at the transition zone of primary cilia and acting as a barrier that prevents diffusion of transmembrane proteins between the cilia and plasma membranes. The polypeptide is B9 domain-containing protein 2 (B9D2) (Bos taurus (Bovine)).